Here is a 392-residue protein sequence, read N- to C-terminus: Phosphoprotein (392 aa).

Disordered regions lie at residues 61-107 and 152-182; these read ESTN…GLDS and PIATSSPIDFKRGAGIPAGSIEGSTQSDGWE. Positions 217–280 are multimerization; sequence LNVNEILNTV…ITTVKIMDPG (64 aa). A coiled-coil region spans residues 219–246; that stretch reads VNEILNTVRNLDSRMNQLETKVDRILSS.

Belongs to the rubulavirus/avulavirus P protein family. In terms of assembly, homotetramer. Interacts (via multimerization domain) with polymerase L; this interaction forms the polymerase L-P complex. Interacts (via N-terminus) with N0 (via Ncore); this interaction allows P to chaperon N0 to avoid N polymerization before encapsidation. Interacts (via C-terminus) with N-RNA template; this interaction positions the polymerase on the template for both transcription and replication.

Essential cofactor of the RNA polymerase L that plays a central role in the transcription and replication by forming the polymerase complex with RNA polymerase L and recruiting L to the genomic N-RNA template for RNA synthesis. Also plays a central role in the encapsidation of nascent RNA chains by forming the encapsidation complex with the nucleocapsid protein N (N-P complex). Acts as a chaperone for newly synthesized free N protein, so-called N0, allowing encapsidation of nascent RNA chains during replication. The nucleoprotein protein N prevents excessive phosphorylation of P, which leads to down-regulation of viral transcription/ replication. Participates, together with N, in the formation of viral factories (viroplasms), which are large inclusions in the host cytoplasm where replication takes place. This chain is Phosphoprotein (P/V), found in Canis lupus familiaris (Dog).